The following is a 237-amino-acid chain: Phosphoribosylaminoimidazole-succinocarboxamide synthase (237 aa).

Belongs to the SAICAR synthetase family.

The catalysed reaction is 5-amino-1-(5-phospho-D-ribosyl)imidazole-4-carboxylate + L-aspartate + ATP = (2S)-2-[5-amino-1-(5-phospho-beta-D-ribosyl)imidazole-4-carboxamido]succinate + ADP + phosphate + 2 H(+). It participates in purine metabolism; IMP biosynthesis via de novo pathway; 5-amino-1-(5-phospho-D-ribosyl)imidazole-4-carboxamide from 5-amino-1-(5-phospho-D-ribosyl)imidazole-4-carboxylate: step 1/2. In Shigella sonnei (strain Ss046), this protein is Phosphoribosylaminoimidazole-succinocarboxamide synthase.